Consider the following 642-residue polypeptide: Probable glutamate--tRNA ligase, cytoplasmic (642 aa).

152 to 154 (RFP) contacts L-glutamate. Residues 157–166 (PNGRLHIGHA) carry the 'HIGH' region motif. His162 contacts ATP. L-glutamate is bound by residues Asp188, 326-330 (YDFAC), and Arg344. ATP-binding positions include Glu347 and 382-386 (VLSKR). The 'KMSKS' region signature appears at 382 to 386 (VLSKR).

The protein belongs to the class-I aminoacyl-tRNA synthetase family. Glutamate--tRNA ligase type 2 subfamily.

It is found in the cytoplasm. The catalysed reaction is tRNA(Glu) + L-glutamate + ATP = L-glutamyl-tRNA(Glu) + AMP + diphosphate. This is Probable glutamate--tRNA ligase, cytoplasmic from Encephalitozoon cuniculi (strain GB-M1) (Microsporidian parasite).